Reading from the N-terminus, the 374-residue chain is Secondary metabolism regulator laeA (374 aa).

The segment at 1-75 is disordered; the sequence is MFEMGPVGTR…NRNGSPSMSP (75 aa). Residues 23–40 show a composition bias toward polar residues; sequence SYHSPTSSDRGRSRQNSD. An S-methylmethionine modification is found at Met-207.

Belongs to the methyltransferase superfamily. LaeA methyltransferase family. Component of the heterotrimeric velvet complex composed of laeA, veA and velB; VeA acting as a bridging protein between laeA and velB. In terms of processing, self-methylates at Met-207.

It localises to the nucleus. The enzyme catalyses L-methionyl-[protein] + S-adenosyl-L-methionine = S-methyl-L-methionyl-[protein] + S-adenosyl-L-homocysteine. Its function is as follows. Methyltransferase that performs automethylation at Met-207. No other methyl-accepting substrate has been identified yet. Component of the velvet transcription factor complex that acts as a global regulator for secondary metabolite gene expression. Controls the expression of the sterigmatocystin, penicillin, and lovastatin gene clusters. Controls light-dependent formation of the velB-vosA complex, veA protein modification, and is required for light-mediated inhibition of sexual development. Within the velvet complex, controls light-dependent secondary metabolism. Involved in the defense response against Drosophila melanogaster larval grazing. The sequence is that of Secondary metabolism regulator laeA from Emericella nidulans (Aspergillus nidulans).